A 434-amino-acid polypeptide reads, in one-letter code: Serine hydroxymethyltransferase (434 aa).

Residues Leu131 and 135–137 (GHL) contribute to the (6S)-5,6,7,8-tetrahydrofolate site. Lys240 carries the N6-(pyridoxal phosphate)lysine modification.

The protein belongs to the SHMT family. As to quaternary structure, homodimer. Requires pyridoxal 5'-phosphate as cofactor.

The protein localises to the cytoplasm. It carries out the reaction (6R)-5,10-methylene-5,6,7,8-tetrahydrofolate + glycine + H2O = (6S)-5,6,7,8-tetrahydrofolate + L-serine. It functions in the pathway one-carbon metabolism; tetrahydrofolate interconversion. It participates in amino-acid biosynthesis; glycine biosynthesis; glycine from L-serine: step 1/1. In terms of biological role, catalyzes the reversible interconversion of serine and glycine with tetrahydrofolate (THF) serving as the one-carbon carrier. This reaction serves as the major source of one-carbon groups required for the biosynthesis of purines, thymidylate, methionine, and other important biomolecules. Also exhibits THF-independent aldolase activity toward beta-hydroxyamino acids, producing glycine and aldehydes, via a retro-aldol mechanism. This is Serine hydroxymethyltransferase from Gluconobacter oxydans (strain 621H) (Gluconobacter suboxydans).